A 383-amino-acid polypeptide reads, in one-letter code: Acetyl-CoA acetyltransferase (383 aa).

Catalysis depends on Cys85, which acts as the Acyl-thioester intermediate. CoA contacts are provided by Cys206, Ser207, Ile209, and Lys328. The Proton acceptor role is filled by His332.

Belongs to the thiolase-like superfamily. Thiolase family. As to quaternary structure, interacts with HMG-CoA synthase (HMGCS) that catalyzes the second step in the pathway and with a DUF35 protein. The acetoacetyl-CoA thiolase/HMG-CoA synthase complex channels the intermediate via a fused CoA-binding site, which allows for efficient coupling of the endergonic thiolase reaction with the exergonic HMGCS reaction.

The catalysed reaction is 2 acetyl-CoA = acetoacetyl-CoA + CoA. The protein operates within metabolic intermediate biosynthesis; (R)-mevalonate biosynthesis; (R)-mevalonate from acetyl-CoA: step 1/3. Catalyzes the condensation of two acetyl-coA molecules into acetoacetyl-CoA. Functions in the mevalonate (MVA) pathway leading to isopentenyl diphosphate (IPP), a key precursor for the biosynthesis of isoprenoid compounds that are building blocks of archaeal membrane lipids. The chain is Acetyl-CoA acetyltransferase from Methanothermobacter thermautotrophicus (strain ATCC 29096 / DSM 1053 / JCM 10044 / NBRC 100330 / Delta H) (Methanobacterium thermoautotrophicum).